Reading from the N-terminus, the 1083-residue chain is Centrosomal protein of 131 kDa (1083 aa).

Disordered regions lie at residues 1-155 (MKGT…AGPR) and 220-258 (GSESSGFGKLPKNVSSATHSARNNTGGSTGLPRRKEVTE). The interval 1 to 250 (MKGTRAIGSV…RNNTGGSTGL (250 aa)) is interaction with PLK4. Residues Ser14 and Ser35 each carry the phosphoserine modification. The residue at position 47 (Ser47) is a Phosphoserine; by MAPKAPK2. The span at 68–87 (QAINNLRRSNSTTQVSQPRS) shows a compositional bias: polar residues. Ser78 is subject to Phosphoserine; by MAPKAPK2 and PLK4. Phosphoserine occurs at positions 89, 105, 114, 146, and 150. The span at 138 to 148 (LPSNARSSSAL) shows a compositional bias: polar residues. The span at 232-245 (NVSSATHSARNNTG) shows a compositional bias: polar residues. The IQ domain maps to 269–289 (NQATVTIQRWYRHQVQRRGAG). Residues 301-429 (REEQRQRSGE…PQQPPEDRTQ (129 aa)) are disordered. Basic and acidic residues-rich tracts occupy residues 317–333 (HQQKEAARRKAREEKAR) and 360–369 (GPPENPRETR). Ser381 bears the Phosphoserine mark. Residue Thr383 is modified to Phosphothreonine. Phosphoserine occurs at positions 453, 489, 496, 499, 731, and 798. A compositionally biased stretch (basic and acidic residues) spans 1047–1076 (KEEAVSSLRTQHEAAVKRADHLEELLEQHR). The segment at 1047–1083 (KEEAVSSLRTQHEAAVKRADHLEELLEQHRRPTPSTK) is disordered.

The protein belongs to the CEP131 family. As to quaternary structure, self-associates. Associates with the centriolar satellite BBSome protein complex. Interacts with BBS4; the interaction limits BBS4 availability for association with the BBSome complex, and hence negatively regulates ciliary localization of the BBSome complex. Interacts with MIB1. Interacts with PCM1; the interaction increases in response to ultraviolet light (UV) radiation. Associates with microtubules; association with microtubules is reduced in response to cellular stress, such as UV stimulation, in a process that requires p38 MAP kinase signaling. Interacts with CEP290, DCTN1, PCNT, PCM1 and CEP152. Interacts with 14-3-3 proteins following UV-induced phosphorylation by MAPKAPK2; this inhibits formation of novel centriolar satellites. Interacts with SDCCAG8. Interacts with CCDC61. Interacts with PLK4. In terms of processing, ubiquitinated. Undergoes monoubiquitination catalyzed by the E3 ubiquitin-protein ligase MIB1 in proliferating cells, preventing cilia formation. Monoubiquitination by MIB1 is inhibited in response to cellular stress, such as ultraviolet light (UV) radiation or heat shock, resulting in cilia formation initiation. MAPKAPK2-dependent phosphorylation at Ser-47 and Ser-78 occurs in response to cellular stress such as exposure to ultraviolet irradiation and promotes binding to 14-3-3 proteins which leads to cytoplasmic sequestration of CEP131 and blocks formation of new centriolar satellites. Phosphorylation at Ser-78 mediated by PLK4 is essential for proper organization and integrity of centriolar satellites but is dispensable for its localization to centrioles and its function in ciliogenesis.

It is found in the cytoplasm. Its subcellular location is the cytoskeleton. It localises to the microtubule organizing center. The protein resides in the centrosome. The protein localises to the centriolar satellite. It is found in the centriole. Its subcellular location is the cilium basal body. It localises to the cytoplasmic vesicle. The protein resides in the secretory vesicle. The protein localises to the acrosome. Its function is as follows. Component of centriolar satellites contributing to the building of a complex and dynamic network required to regulate cilia/flagellum formation. In proliferating cells, MIB1-mediated ubiquitination induces its sequestration within centriolar satellites, precluding untimely cilia formation initiation. In contrast, during normal and ultraviolet or heat shock cellular stress-induced ciliogenesis, its non-ubiquitinated form is rapidly displaced from centriolar satellites and recruited to centrosome/basal bodies in a microtubule- and p38 MAPK-dependent manner. Also acts as a negative regulator of BBSome ciliary trafficking. Plays a role in sperm flagellar formation; may be involved in the regulation of intraflagellar transport (IFT) and/or intramanchette (IMT) trafficking, which are important for axoneme extension and/or cargo delivery to the nascent sperm tail. Required for optimal cell proliferation and cell cycle progression; may play a role in the regulation of genome stability in non-ciliogenic cells. Involved in centriole duplication. Required for CEP152, WDR62 and CEP63 centrosomal localization and promotes the centrosomal localization of CDK2. Essential for maintaining proper centriolar satellite integrity. The chain is Centrosomal protein of 131 kDa (CEP131) from Homo sapiens (Human).